Here is a 43-residue protein sequence, read N- to C-terminus: Protein PsbN (43 aa).

Residues 5–27 (NLVTISISCLLVSLTGYAIYTSF) traverse the membrane as a helical segment.

The protein belongs to the PsbN family.

It is found in the plastid. Its subcellular location is the chloroplast thylakoid membrane. Functionally, may play a role in photosystem I and II biogenesis. The chain is Protein PsbN from Gnetum gnemon (Spanish joint-fir).